Reading from the N-terminus, the 370-residue chain is MTLTEKKKVVVGMSGGVDSSMAAALLKEEGYEVIGITLQTMPSGGPDDVGGCCSITAIDDARRVAHQLGIPHYVLNFRTIFDENVIDYFTNAYLSGETPNPCTMCNRVVRWGEFLRKARALGADYLATGHYAKVLQDPQSGRCFLSRPTDTWKDQTYMLYNLTQDQLKHTLFPLADYKKEHIREMAAERGLLRVSRKPDSQEICFIPDDDYVSFIRERSPEKIKPGNFVDRQGNILGRHQGLINYTVGQRKGLGVTFGKPMFVLGFNVEGNEVILGEDQEVYAHTLLATDLNWIAIPGVEGPLTVQAKIRYKAPLAEAKIIPLKDSETLPGAIGPVVRVEFTTPQRAITPGQAVVFYQGELVVGGGKIIT.

Residues 12-19 (GMSGGVDS) and leucine 38 contribute to the ATP site. The Nucleophile role is filled by cysteine 105. A disulfide bridge connects residues cysteine 105 and cysteine 204. Glycine 129 provides a ligand contact to ATP. Positions 153–155 (KDQ) are interaction with tRNA. The Cysteine persulfide intermediate role is filled by cysteine 204. Residues 310–311 (RY) form an interaction with tRNA region.

The protein belongs to the MnmA/TRMU family.

It localises to the cytoplasm. The enzyme catalyses S-sulfanyl-L-cysteinyl-[protein] + uridine(34) in tRNA + AH2 + ATP = 2-thiouridine(34) in tRNA + L-cysteinyl-[protein] + A + AMP + diphosphate + H(+). In terms of biological role, catalyzes the 2-thiolation of uridine at the wobble position (U34) of tRNA, leading to the formation of s(2)U34. In Desulfitobacterium hafniense (strain Y51), this protein is tRNA-specific 2-thiouridylase MnmA.